A 326-amino-acid chain; its full sequence is Glycerol-3-phosphate dehydrogenase [NAD(P)+] (326 aa).

NADPH is bound by residues Trp15, Arg35, and Lys107. Sn-glycerol 3-phosphate-binding residues include Lys107, Gly135, and Ser137. Ala139 provides a ligand contact to NADPH. Residues Lys190, Asp243, Ser253, Arg254, and Asn255 each contribute to the sn-glycerol 3-phosphate site. The active-site Proton acceptor is the Lys190. Arg254 is a binding site for NADPH. The NADPH site is built by Leu273 and Glu275.

It belongs to the NAD-dependent glycerol-3-phosphate dehydrogenase family.

It is found in the cytoplasm. It catalyses the reaction sn-glycerol 3-phosphate + NAD(+) = dihydroxyacetone phosphate + NADH + H(+). The enzyme catalyses sn-glycerol 3-phosphate + NADP(+) = dihydroxyacetone phosphate + NADPH + H(+). It participates in membrane lipid metabolism; glycerophospholipid metabolism. In terms of biological role, catalyzes the reduction of the glycolytic intermediate dihydroxyacetone phosphate (DHAP) to sn-glycerol 3-phosphate (G3P), the key precursor for phospholipid synthesis. The polypeptide is Glycerol-3-phosphate dehydrogenase [NAD(P)+] (Bradyrhizobium diazoefficiens (strain JCM 10833 / BCRC 13528 / IAM 13628 / NBRC 14792 / USDA 110)).